Here is a 191-residue protein sequence, read N- to C-terminus: Calcium and integrin-binding protein 1 (191 aa).

Glycine 2 carries N-myristoyl glycine lipidation. 2 consecutive EF-hand domains span residues 103–138 (TPDIKSHYAFRIFDFDDDGTLNREDLSRLVNCLTGE) and 148–183 (EMKQLIDNILEESDIDRDGTINLSEFQHVISRSPDF). The Ca(2+) site is built by aspartate 116, aspartate 118, aspartate 120, threonine 122, aspartate 127, aspartate 161, aspartate 163, aspartate 165, threonine 167, and glutamate 172. Aspartate 118 carries the post-translational modification Phosphoserine.

As to quaternary structure, monomer. Interacts with MYO1C. Interacts (via C-terminal region) with PPP3R1 and CACNA1C; the interactions increase upon cardiomyocytes hypertrophy. Interacts with the heterodimeric integrin alpha-IIb/beta3 (ITGA2B-ITGB3). Interacts with ITGA2B (via cytoplasmic domain); the interaction is direct and calcium-dependent. Interacts with the protein kinases PLK2/SNK and PRKDC (via the region immediately upstream of the kinase domain). Interacts with PLK3; the interaction inhibits PLK3 kinase activity. Interacts with PSEN2. Interacts (via C-terminus) with F8. Interacts with NBR1 (via C-terminus). Interacts with FEZ1 (via C-terminus). Interacts with UBR5 (via C-terminus); the interaction is sensitive to DNA damage, and may target CIB1 for ubiquitin-mediated degradation. Interacts with IFI6; the interaction is direct. Interacts with BCL2. Interacts with ITPR3; the interaction occurs in a calcium-dependent manner. Interacts with PTK2/FAK1. Interacts with MAP3K5; the interaction inhibits MAP3K5 activation by phosphorylation, and its subsequent interaction with TRAF2. Isoform 2 interacts with PRKD2 (via N-terminal AP-rich region), PTK2/FAK1 and PAK1. Interacts with TAS1R2 (via C-terminus); the interaction is independent of the myristoylation state of CIB1. Interacts (via C-terminal region) with STMN2 (via the N-terminal region); the interaction is direct, occurs in a calcium-dependent manner and attenuates the STMN2-induced neurite outgrowth inhibition. Interacts with SPHK1, the interaction occurs in a calcium-dependent manner. Interacts with ITGA2B (via C-terminal cytoplasmic tail); the interaction occurs upon platelet aggregation and is stabilized/increased in a calcium and magnesium-dependent manner. Interacts with PAK1 (via N-terminal region); the interaction is direct and occurs in a calcium-dependent manner. Interacts with RAC3 (via C-terminal region); the interaction induces their association with the cytoskeleton upon alpha-IIb/beta3 integrin-mediated adhesion. Interacts with ITGA5 and ITGAV. Interacts and forms a complex with TMC6 and TMC8; the interaction stabilizes each component of the complex. (Microbial infection) Interacts with human papillomavirus 4/HPV4 protein E8, human papillomavirus 5/HPV5 protein E1, and human papillomavirus 16/HPV16 proteins E2 and E5. Post-translationally, phosphorylation of isoform 2 at Ser-118 by PRKD2 increases its ability to stimulate tumor angiogenesis. In terms of tissue distribution, ubiquitously expressed. Expressed in the epidermis, hair follicles and keratinocytes. Detected in platelets and in cell lines of megakaryocytic and erythrocytic lineages. Both isoform 1 and isoform 2 are detected in various cancer cell lines, with isoform 2 being the predominant form (at protein level).

It is found in the membrane. It localises to the cell membrane. The protein localises to the sarcolemma. The protein resides in the apical cell membrane. Its subcellular location is the cell projection. It is found in the ruffle membrane. It localises to the filopodium tip. The protein localises to the growth cone. The protein resides in the lamellipodium. Its subcellular location is the cytoplasm. It is found in the cytoskeleton. It localises to the microtubule organizing center. The protein localises to the centrosome. The protein resides in the perinuclear region. Its subcellular location is the nucleus. It is found in the neuron projection. It localises to the perikaryon. The protein localises to the golgi apparatus. The protein resides in the trans-Golgi network. Functionally, calcium-binding protein that plays a role in the regulation of numerous cellular processes, such as cell differentiation, cell division, cell proliferation, cell migration, thrombosis, angiogenesis, cardiac hypertrophy and apoptosis. Involved in bone marrow megakaryocyte differentiation by negatively regulating thrombopoietin-mediated signaling pathway. Participates in the endomitotic cell cycle of megakaryocyte, a form of mitosis in which both karyokinesis and cytokinesis are interrupted. Plays a role in integrin signaling by negatively regulating alpha-IIb/beta3 activation in thrombin-stimulated megakaryocytes preventing platelet aggregation. Up-regulates PTK2/FAK1 activity, and is also needed for the recruitment of PTK2/FAK1 to focal adhesions; it thus appears to play an important role in focal adhesion formation. Positively regulates cell migration on fibronectin in a CDC42-dependent manner, the effect being negatively regulated by PAK1. Functions as a negative regulator of stress activated MAP kinase (MAPK) signaling pathways. Down-regulates inositol 1,4,5-trisphosphate receptor-dependent calcium signaling. Involved in sphingosine kinase SPHK1 translocation to the plasma membrane in a N-myristoylation-dependent manner preventing TNF-alpha-induced apoptosis. Regulates serine/threonine-protein kinase PLK3 activity for proper completion of cell division progression. Plays a role in microtubule (MT) dynamics during neuronal development; disrupts the MT depolymerization activity of STMN2 attenuating NGF-induced neurite outgrowth and the MT reorganization at the edge of lamellipodia. Promotes cardiomyocyte hypertrophy via activation of the calcineurin/NFAT signaling pathway. Stimulates calcineurin PPP3R1 activity by mediating its anchoring to the sarcolemma. In ischemia-induced (pathological or adaptive) angiogenesis, stimulates endothelial cell proliferation, migration and microvessel formation by activating the PAK1 and ERK1/ERK2 signaling pathway. Also promotes cancer cell survival and proliferation. May regulate cell cycle and differentiation of spermatogenic germ cells, and/or differentiation of supporting Sertoli cells. Forms a complex with TMC6/EVER1 and TMC8/EVER2 in lymphocytes and keratynocytes where CIB1 stabilizes TMC6 and TMC8 levels and reciprocally. In terms of biological role, acts as a restriction factor that promotes keratinocyte-intrinsic immunity to human beta-papillomaviruses (HPVs). Plays a regulatory role in angiogenesis and tumor growth by mediating PKD/PRKD2-induced vascular endothelial growth factor A (VEGFA) secretion. This Homo sapiens (Human) protein is Calcium and integrin-binding protein 1 (CIB1).